A 621-amino-acid chain; its full sequence is tRNA uridine 5-carboxymethylaminomethyl modification enzyme MnmG (621 aa).

8 to 13 (GAGHAG) serves as a coordination point for FAD. 269-283 (GPRYCPSVEDKIFRF) provides a ligand contact to NAD(+).

This sequence belongs to the MnmG family. As to quaternary structure, homodimer. Heterotetramer of two MnmE and two MnmG subunits. The cofactor is FAD.

Its subcellular location is the cytoplasm. Functionally, NAD-binding protein involved in the addition of a carboxymethylaminomethyl (cmnm) group at the wobble position (U34) of certain tRNAs, forming tRNA-cmnm(5)s(2)U34. The protein is tRNA uridine 5-carboxymethylaminomethyl modification enzyme MnmG of Chlorobium chlorochromatii (strain CaD3).